The sequence spans 344 residues: DNA fragmentation factor subunit beta (344 aa).

One can recognise a CIDE-N domain in the interval 7–83; that stretch reads QPKCVKLRAL…LLTAGETWHG (77 aa).

Heterodimer of DFFA and DFFB. Interacts with H1-1.

The protein resides in the cytoplasm. Its subcellular location is the nucleus. Its activity is regulated as follows. Inhibited by DFFA (DFF45). Functionally, nuclease that induces DNA fragmentation and chromatin condensation during apoptosis. Degrades naked DNA and induces apoptotic morphology. The polypeptide is DNA fragmentation factor subunit beta (Dffb) (Mus musculus (Mouse)).